The following is a 416-amino-acid chain: Succinate--CoA ligase [ADP-forming] subunit beta (416 aa).

The N-terminal 14 residues, Met-1–Asn-14, are a transit peptide targeting the hydrogenosome. ATP is bound by residues Lys-64, Gly-71–Gly-73, and Glu-132. The Mg(2+) site is built by Asn-224 and Asp-242. Residues Asn-293 and Gly-350–Met-352 each bind substrate.

Belongs to the succinate/malate CoA ligase beta subunit family. In terms of assembly, heterodimer of an alpha and a beta subunit. Mg(2+) serves as cofactor.

Its subcellular location is the hydrogenosome. It carries out the reaction succinate + ATP + CoA = succinyl-CoA + ADP + phosphate. The protein operates within carbohydrate metabolism; tricarboxylic acid cycle; succinate from succinyl-CoA (ligase route): step 1/1. Its function is as follows. Succinyl-CoA synthetase functions in the citric acid cycle (TCA), coupling the hydrolysis of succinyl-CoA to the synthesis of ATP and thus represents the only step of substrate-level phosphorylation in the TCA. The beta subunit provides nucleotide specificity of the enzyme and binds the substrate succinate, while the binding sites for coenzyme A and phosphate are found in the alpha subunit. This chain is Succinate--CoA ligase [ADP-forming] subunit beta (SCSb), found in Blastocystis sp. subtype 1 (strain ATCC 50177 / NandII).